A 582-amino-acid chain; its full sequence is Frizzled-10 (582 aa).

An N-terminal signal peptide occupies residues 1–21 (MQHPGPRLWLVLQVMIGSCTA). Residues 22–226 (ISSMDLERPG…DVYWSRDDKR (205 aa)) are Extracellular-facing. Positions 30-151 (PGDGKCQPVE…NDPNYLCMEA (122 aa)) constitute an FZ domain. 5 disulfides stabilise this stretch: cysteine 35/cysteine 96, cysteine 43/cysteine 89, cysteine 80/cysteine 118, cysteine 107/cysteine 148, and cysteine 111/cysteine 135. Asparagine 49 is a glycosylation site (N-linked (GlcNAc...) asparagine). A disordered region spans residues 153–189 (NNGSDEPSRGSGMFPPLFRPQRPHSAQEHPLKDGGPG). A glycan (N-linked (GlcNAc...) asparagine) is linked at asparagine 154. A helical membrane pass occupies residues 227–247 (FAVVWLAIWSVLCFFSSAFTV). Over 248-263 (LTFLIDPSRFRYPERP) the chain is Cytoplasmic. A helical transmembrane segment spans residues 264 to 284 (IIFLSMCYCVYSVGYIIRLFA). Residues 285–312 (GAESIACDRDSGQLYVIQEGLESTGCTL) lie on the Extracellular side of the membrane. A helical membrane pass occupies residues 313-333 (VFLVLYYFGMASSLWWVVLTL). Residues 334–352 (TWFLAAGKKWGHEAIEANS) are Cytoplasmic-facing. Residues 353–373 (SYFHLAAWAIPAVKTILILVM) form a helical membrane-spanning segment. Residues 374 to 394 (RRVAGDELTGVCYVGSMDVNA) are Extracellular-facing. The chain crosses the membrane as a helical span at residues 395-415 (LTGFVLVPLACYLVIGTSFIL). Residues 416–444 (SGFVALFHIRRVMKTGGENTDKLEKLMVR) lie on the Cytoplasmic side of the membrane. A helical membrane pass occupies residues 445–465 (IGVFSLLYTVPATCVIACYFY). Residues 466–503 (ERLNMDYWKMLATQHKCKMNNQTKTPDCLMTTSIPAVE) lie on the Extracellular side of the membrane. Asparagine 486 carries N-linked (GlcNAc...) asparagine glycosylation. The chain crosses the membrane as a helical span at residues 504-524 (VFMVKVSMLLVVGITSGVWVW). The Cytoplasmic portion of the chain corresponds to 525–582 (TSKTLQSWQHVCSRGLKRKSRRKPASVVTSAGIYKKAQHPQKPHLGKYELPAQPSACV). The short motif at 527–532 (KTLQSW) is the Lys-Thr-X-X-X-Trp motif, mediates interaction with the PDZ domain of Dvl family members element. The disordered stretch occupies residues 561 to 582 (AQHPQKPHLGKYELPAQPSACV). Residues 580–582 (ACV) carry the PDZ-binding motif.

The protein belongs to the G-protein coupled receptor Fz/Smo family. In terms of assembly, interacts with MYOC. Interacts with WNT7B. Ubiquitinated by ZNRF3, leading to its degradation by the proteasome.

It localises to the cell membrane. In terms of biological role, receptor for Wnt proteins. Functions in the canonical Wnt/beta-catenin signaling pathway. The canonical Wnt/beta-catenin signaling pathway leads to the activation of disheveled proteins, inhibition of GSK-3 kinase, nuclear accumulation of beta-catenin and activation of Wnt target genes. A second signaling pathway involving PKC and calcium fluxes has been seen for some family members, but it is not yet clear if it represents a distinct pathway or if it can be integrated in the canonical pathway, as PKC seems to be required for Wnt-mediated inactivation of GSK-3 kinase. Both pathways seem to involve interactions with G-proteins. May be involved in transduction and intercellular transmission of polarity information during tissue morphogenesis and/or in differentiated tissues. This is Frizzled-10 (Fzd10) from Mus musculus (Mouse).